A 508-amino-acid polypeptide reads, in one-letter code: ATP synthase subunit alpha, chloroplastic (508 aa).

170–177 (GDRQTGKT) is a binding site for ATP.

This sequence belongs to the ATPase alpha/beta chains family. As to quaternary structure, F-type ATPases have 2 components, CF(1) - the catalytic core - and CF(0) - the membrane proton channel. CF(1) has five subunits: alpha(3), beta(3), gamma(1), delta(1), epsilon(1). CF(0) has four main subunits: a, b, b' and c.

It localises to the plastid. The protein resides in the chloroplast thylakoid membrane. It catalyses the reaction ATP + H2O + 4 H(+)(in) = ADP + phosphate + 5 H(+)(out). Produces ATP from ADP in the presence of a proton gradient across the membrane. The alpha chain is a regulatory subunit. The polypeptide is ATP synthase subunit alpha, chloroplastic (Lactuca sativa (Garden lettuce)).